Consider the following 239-residue polypeptide: Ribonuclease 3 (239 aa).

One can recognise an RNase III domain in the interval 18 to 141; it reads YLTLEKALGY…LMAGVYLEAG (124 aa). Residue E54 coordinates Mg(2+). Residue D58 is part of the active site. Mg(2+)-binding residues include S127 and E130. E130 is a catalytic residue. A DRBM domain is found at 168 to 237; the sequence is DYKTALQELT…AYQALQKLKE (70 aa).

The protein belongs to the ribonuclease III family. As to quaternary structure, homodimer. Mg(2+) is required as a cofactor.

The protein localises to the cytoplasm. The enzyme catalyses Endonucleolytic cleavage to 5'-phosphomonoester.. In terms of biological role, digests double-stranded RNA. Involved in the processing of primary rRNA transcript to yield the immediate precursors to the large and small rRNAs (23S and 16S). Processes some mRNAs, and tRNAs when they are encoded in the rRNA operon. Processes pre-crRNA and tracrRNA of type II CRISPR loci if present in the organism. This chain is Ribonuclease 3, found in Helicobacter pylori (strain P12).